A 712-amino-acid polypeptide reads, in one-letter code: WD repeat-containing protein 91 (712 aa).

The stretch at 148–180 (RRTNQVQEENEVLRQKLFALQAEIHRLKKEEQQ) forms a coiled coil. S221 carries the post-translational modification Phosphoserine. The span at 230–243 (LLPQSKKSPSRLSP) shows a compositional bias: low complexity. Positions 230-336 (LLPQSKKSPS…EAEPCPELHT (107 aa)) are disordered. Phosphoserine occurs at positions 253 and 258. Basic and acidic residues predominate over residues 297–308 (RLQDHGKERKEL). WD repeat units lie at residues 371-410 (EHHSSIMHCRVDCSGRRVASLDVDGVIKVWSFNPIMQTKA), 413-453 (ISKS…NLCE), 480-520 (AAPS…QQLQ), 525-564 (PEPIAINCTAFNHNGNLLVTGAADGVIRLFDMQQHECAMS), 567-606 (AHYGEVYSVEFSYDENTVYSIGEDGKFIQWNIHKSGLKVS), 629-667 (VQVPRGRLFAFDSEGNYMLTCSATGGVIYKLGGDEKVLE), and 674-712 (GHRAPVVTVDWSTAMDCGTCLTASMDGKIKLTTLLAHKA).

It belongs to the WD repeat WDR91 family. In terms of assembly, interacts with WDR81; involved in early to late endosome cargo transport. Interacts with BECN1; negatively regulates the PI3 kinase/PI3K activity associated with endosomal membranes.

The protein resides in the early endosome membrane. Its subcellular location is the late endosome membrane. Functions as a negative regulator of the PI3 kinase/PI3K activity associated with endosomal membranes via BECN1, a core subunit of the PI3K complex. By modifying the phosphatidylinositol 3-phosphate/PtdInsP3 content of endosomal membranes may regulate endosome fusion, recycling, sorting and early to late endosome transport. It is for instance, required for the delivery of cargos like BST2/tetherin from early to late endosome and thereby participates indirectly to their degradation by the lysosome. May play a role in meiosis. In Pongo abelii (Sumatran orangutan), this protein is WD repeat-containing protein 91.